The primary structure comprises 101 residues: 2-amino-4-ketopentanoate thiolase alpha subunit (101 aa).

Belongs to the OrtA family. Heterodimer with OrtB.

It catalyses the reaction D-alanine + acetyl-CoA = (2R)-2-amino-4-oxopentanoate + CoA. With respect to regulation, completely inhibited by p-chloromercuribenzoate (p-ClHgBzO) and acetyl-CoA, and partially inhibited by N-ethylmaleimide. Involved in the ornithine fermentation pathway. Catalyzes the thiolytic cleavage of 2-amino-4-ketopentanoate (AKP) with coenzyme A (CoA) to form acetyl-CoA and alanine. It is strictly specific for AKP. This Acetoanaerobium sticklandii (strain ATCC 12662 / DSM 519 / JCM 1433 / CCUG 9281 / NCIMB 10654 / HF) (Clostridium sticklandii) protein is 2-amino-4-ketopentanoate thiolase alpha subunit.